The primary structure comprises 313 residues: Fructose-1,6-bisphosphatase class 1 (313 aa).

Residues Glu90, Asp111, Leu113, and Asp114 each coordinate Mg(2+). Substrate is bound by residues 114-117 (DGSS), Tyr222, and Lys253. Glu259 contributes to the Mg(2+) binding site.

This sequence belongs to the FBPase class 1 family. In terms of assembly, homotetramer. Requires Mg(2+) as cofactor.

The protein resides in the cytoplasm. It carries out the reaction beta-D-fructose 1,6-bisphosphate + H2O = beta-D-fructose 6-phosphate + phosphate. It functions in the pathway carbohydrate biosynthesis; gluconeogenesis. This chain is Fructose-1,6-bisphosphatase class 1, found in Geotalea uraniireducens (strain Rf4) (Geobacter uraniireducens).